The chain runs to 325 residues: Leucine-rich repeat protein FLOR 1 (325 aa).

LRR repeat units lie at residues N65 to D88, L89 to L114, K115 to S140, T142 to M162, P163 to S185, V187 to Y211, F213 to R233, N234 to F256, A257 to K280, and L281 to T305.

The protein belongs to the polygalacturonase-inhibiting protein family. Interacts with MADS domain transcription factors during flower development. Component of a complex made of FLOR1, VSP1 and AGAMOUS (AG). Binds directly with AG. In terms of tissue distribution, confined to flowers and inflorescences (e.g. inflorescence meristems, floral meristems, stamens and carpels).

Its subcellular location is the cytoplasm. The protein localises to the nucleus. The protein resides in the perinuclear region. It is found in the cell membrane. Its function is as follows. Promotes flowering transition in long days (LD). In Arabidopsis thaliana (Mouse-ear cress), this protein is Leucine-rich repeat protein FLOR 1.